The primary structure comprises 125 residues: Multifunctional methyltransferase subunit TRM112-like protein (125 aa).

The region spanning 2–119 is the TRM112 domain; that stretch reads KLLTHNLLSS…SRGIPNMLLS (118 aa). Phosphoserine occurs at positions 119 and 125.

Belongs to the TRM112 family. As to quaternary structure, part of the heterodimeric BUD23-TRM112 methyltransferase complex; this heterodimerization is necessary for the metabolic stability and activity of the catalytic subunit BUD23. Part of the heterodimeric N6AMT1-TRM112 methyltransferase complex; this heterodimerization is necessary for S-adenosyl-L-methionine-binding to N6AMT1/HEMK2. Part of the heterodimeric ALKBH8-TRM112 methyltransferase complex. Part of the heterodimeric METTL5-TRM112 methyltransferase complex; this heterodimerization is necessary for the stability of the catalytic subunit METTL5. Part of the heterodimeric THUMPD3-TRM112 methyltransferase complex; this complex forms an active tRNA methyltransferase, where TRMT112 acts as an activator of the catalytic subunit THUMPD3. Part of the heterodimeric THUMPD2-TRM112 methyltransferase complex; this complex forms an active tRNA methyltransferase, where TRMT112 acts as an activator of the catalytic subunit THUMPD2. Part of the heterodimeric TRMT11-TRM112 methyltransferase complex; this complex forms an active tRNA methyltransferase, where TRMT112 acts as an activator of the catalytic subunit TRMT11.

Its subcellular location is the nucleus. The protein localises to the nucleoplasm. It is found in the cytoplasm. The protein resides in the perinuclear region. In terms of biological role, acts as an activator of both rRNA/tRNA and protein methyltransferases. Together with methyltransferase BUD23, methylates the N(7) position of a guanine in 18S rRNA. The heterodimer with N6AMT1/HEMK2 catalyzes N5-methylation of ETF1 on 'Gln-185', using S-adenosyl L-methionine as methyl donor. The heterodimer with N6AMT1/HEMK2 also monomethylates 'Lys-12' of histone H4 (H4K12me1). The heterodimer with ALKBH8 catalyzes the methylation of 5-carboxymethyl uridine to 5-methylcarboxymethyl uridine at the wobble position of the anticodon loop in target tRNA species. Together with methyltransferase THUMPD3, catalyzes the formation of N(2)-methylguanosine at position 6 in a broad range of tRNA substrates and at position 7 of tRNA(Trp). Involved in the pre-rRNA processing steps leading to small-subunit rRNA production. Together with methyltransferase METTL5, specifically methylates the 6th position of adenine in position 1832 of 18S rRNA. This chain is Multifunctional methyltransferase subunit TRM112-like protein, found in Homo sapiens (Human).